Reading from the N-terminus, the 281-residue chain is Small ribosomal subunit protein uS2 (281 aa).

Residues 229–281 (RSGANKTEGEAAEQPMAAWEKELLTNEAPAEASAEAAAPAAAEGETAEAPKAE) are disordered. Residues 255 to 275 (EAPAEASAEAAAPAAAEGETA) show a composition bias toward low complexity.

Belongs to the universal ribosomal protein uS2 family.

The polypeptide is Small ribosomal subunit protein uS2 (Bifidobacterium longum subsp. infantis (strain ATCC 15697 / DSM 20088 / JCM 1222 / NCTC 11817 / S12)).